Consider the following 426-residue polypeptide: Gamma-glutamyl phosphate reductase (426 aa).

Belongs to the gamma-glutamyl phosphate reductase family.

It localises to the cytoplasm. It catalyses the reaction L-glutamate 5-semialdehyde + phosphate + NADP(+) = L-glutamyl 5-phosphate + NADPH + H(+). The protein operates within amino-acid biosynthesis; L-proline biosynthesis; L-glutamate 5-semialdehyde from L-glutamate: step 2/2. Functionally, catalyzes the NADPH-dependent reduction of L-glutamate 5-phosphate into L-glutamate 5-semialdehyde and phosphate. The product spontaneously undergoes cyclization to form 1-pyrroline-5-carboxylate. This Cupriavidus pinatubonensis (strain JMP 134 / LMG 1197) (Cupriavidus necator (strain JMP 134)) protein is Gamma-glutamyl phosphate reductase.